Consider the following 373-residue polypeptide: Leucine-, isoleucine-, valine-, threonine-, and alanine-binding protein (373 aa).

Positions 1–26 are cleaved as a signal peptide; it reads MKKGTQRLSRLFAAMAIAGFASYSMA. C80 and C105 are joined by a disulfide.

Belongs to the leucine-binding protein family.

The protein resides in the periplasm. Component of the high-affinity leucine, isoleucine, valine transport system I (LIV-I), which is operative without Na(+) and is specific for alanine and threonine, in addition to branched-chain amino acids. Binds L-leucine, L-isoleucine, L-valine, L-threonine and L-alanine with nanomolar affinities. Can also bind L-homoserine with high affinity. The chain is Leucine-, isoleucine-, valine-, threonine-, and alanine-binding protein (braC) from Pseudomonas aeruginosa (strain ATCC 15692 / DSM 22644 / CIP 104116 / JCM 14847 / LMG 12228 / 1C / PRS 101 / PAO1).